A 98-amino-acid polypeptide reads, in one-letter code: Integration host factor subunit alpha (98 aa).

The segment at Phe49 to Asp70 is disordered.

This sequence belongs to the bacterial histone-like protein family. As to quaternary structure, heterodimer of an alpha and a beta chain.

In terms of biological role, this protein is one of the two subunits of integration host factor, a specific DNA-binding protein that functions in genetic recombination as well as in transcriptional and translational control. The polypeptide is Integration host factor subunit alpha (Yersinia pestis).